A 464-amino-acid chain; its full sequence is MPDAKKQGRSNKAMTFFVCFLAALAGLLFGLDIGVIAGALPFIADEFQITSHTQEWVVSSMMFGAAVGAVGSGWLSFKLGRKKSLMIGAILFVAGSLFSAAAPNVEVLILSRVLLGLAVGVASYTAPLYLSEIAPEKIRGSMISMYQLMITIGILGAYLSDTAFSYTGAWRWMLGVIIIPAILLLIGVFFLPDSPRWFAAKRRFVDAERVLLRLRDTSAEAKRELDEIRESLQVKQSGWALFKENSNFRRAVFLGVLLQVMQQFTGMNVIMYYAPKIFELAGYTNTTEQMWGTVIVGLTNVLATFIAIGLVDRWGRKPTLTLGFLVMAAGMGVLGTMMHIGIHSPSAQYFAIAMLLMFIVGFAMSAGPLIWVLCSEIQPLKGRDFGITCSTATNWIANMIVGATFLTMLNTLGNANTFWVYAALNVLFILLTLWLVPETKHVSLEHIERNLMKGRKLREIGAHD.

Residues 1 to 15 are Cytoplasmic-facing; the sequence is MPDAKKQGRSNKAMT. Residues 16-36 traverse the membrane as a helical segment; it reads FFVCFLAALAGLLFGLDIGVI. Over 37 to 56 the chain is Periplasmic; sequence AGALPFIADEFQITSHTQEW. The helical transmembrane segment at 57–77 threads the bilayer; the sequence is VVSSMMFGAAVGAVGSGWLSF. At 78–84 the chain is on the cytoplasmic side; the sequence is KLGRKKS. The helical transmembrane segment at 85–105 threads the bilayer; that stretch reads LMIGAILFVAGSLFSAAAPNV. Over 106–112 the chain is Periplasmic; it reads EVLILSR. Residues 113 to 133 traverse the membrane as a helical segment; sequence VLLGLAVGVASYTAPLYLSEI. Topologically, residues 134 to 139 are cytoplasmic; sequence APEKIR. A helical membrane pass occupies residues 140–160; that stretch reads GSMISMYQLMITIGILGAYLS. The Periplasmic portion of the chain corresponds to 161–171; sequence DTAFSYTGAWR. A helical membrane pass occupies residues 172-192; the sequence is WMLGVIIIPAILLLIGVFFLP. Topologically, residues 193-250 are cytoplasmic; sequence DSPRWFAAKRRFVDAERVLLRLRDTSAEAKRELDEIRESLQVKQSGWALFKENSNFRR. The helical transmembrane segment at 251-271 threads the bilayer; that stretch reads AVFLGVLLQVMQQFTGMNVIM. Topologically, residues 272–290 are periplasmic; sequence YYAPKIFELAGYTNTTEQM. The helical transmembrane segment at 291 to 311 threads the bilayer; the sequence is WGTVIVGLTNVLATFIAIGLV. Residues 312–321 are Cytoplasmic-facing; that stretch reads DRWGRKPTLT. A helical transmembrane segment spans residues 322–342; that stretch reads LGFLVMAAGMGVLGTMMHIGI. The Periplasmic segment spans residues 343 to 351; that stretch reads HSPSAQYFA. Residues 352–372 form a helical membrane-spanning segment; that stretch reads IAMLLMFIVGFAMSAGPLIWV. The Cytoplasmic segment spans residues 373-394; the sequence is LCSEIQPLKGRDFGITCSTATN. A helical membrane pass occupies residues 395-415; it reads WIANMIVGATFLTMLNTLGNA. Position 416 (Asn-416) is a topological domain, periplasmic. The helical transmembrane segment at 417–437 threads the bilayer; it reads TFWVYAALNVLFILLTLWLVP. Residues 438-464 lie on the Cytoplasmic side of the membrane; that stretch reads ETKHVSLEHIERNLMKGRKLREIGAHD.

The protein belongs to the major facilitator superfamily. Sugar transporter (TC 2.A.1.1) family.

The protein resides in the cell inner membrane. Uptake of galactose across the boundary membrane with the concomitant transport of protons into the cell (symport system). The polypeptide is Galactose-proton symporter (galP) (Escherichia coli O6:H1 (strain CFT073 / ATCC 700928 / UPEC)).